The chain runs to 203 residues: Ribosomal RNA small subunit methyltransferase G (203 aa).

S-adenosyl-L-methionine-binding positions include glycine 73, leucine 78, 124–125 (VE), and arginine 138.

Belongs to the methyltransferase superfamily. RNA methyltransferase RsmG family.

The protein localises to the cytoplasm. The enzyme catalyses guanosine(527) in 16S rRNA + S-adenosyl-L-methionine = N(7)-methylguanosine(527) in 16S rRNA + S-adenosyl-L-homocysteine. In terms of biological role, specifically methylates the N7 position of guanine in position 527 of 16S rRNA. The polypeptide is Ribosomal RNA small subunit methyltransferase G (Glaesserella parasuis serovar 5 (strain SH0165) (Haemophilus parasuis)).